A 335-amino-acid polypeptide reads, in one-letter code: Aspartate--ammonia ligase (335 aa).

It belongs to the class-II aminoacyl-tRNA synthetase family. AsnA subfamily.

Its subcellular location is the cytoplasm. It catalyses the reaction L-aspartate + NH4(+) + ATP = L-asparagine + AMP + diphosphate + H(+). It participates in amino-acid biosynthesis; L-asparagine biosynthesis; L-asparagine from L-aspartate (ammonia route): step 1/1. The protein is Aspartate--ammonia ligase of Pediococcus pentosaceus (strain ATCC 25745 / CCUG 21536 / LMG 10740 / 183-1w).